Consider the following 305-residue polypeptide: Ribonuclease BN (305 aa).

7 residues coordinate Zn(2+): His64, His66, Asp68, His69, His141, Asp212, and His270. The active-site Proton acceptor is the Asp68.

Belongs to the RNase Z family. RNase BN subfamily. Homodimer. Zn(2+) serves as cofactor.

Its function is as follows. Zinc phosphodiesterase, which has both exoribonuclease and endoribonuclease activities. The polypeptide is Ribonuclease BN (Escherichia coli O139:H28 (strain E24377A / ETEC)).